The sequence spans 176 residues: Adenine phosphoribosyltransferase (176 aa).

This sequence belongs to the purine/pyrimidine phosphoribosyltransferase family. Homodimer.

Its subcellular location is the cytoplasm. The enzyme catalyses AMP + diphosphate = 5-phospho-alpha-D-ribose 1-diphosphate + adenine. The protein operates within purine metabolism; AMP biosynthesis via salvage pathway; AMP from adenine: step 1/1. Catalyzes a salvage reaction resulting in the formation of AMP, that is energically less costly than de novo synthesis. The sequence is that of Adenine phosphoribosyltransferase from Borreliella afzelii (strain PKo) (Borrelia afzelii).